A 253-amino-acid chain; its full sequence is Imidazole glycerol phosphate synthase subunit HisF (253 aa).

Residues D11 and D130 contribute to the active site.

This sequence belongs to the HisA/HisF family. As to quaternary structure, heterodimer of HisH and HisF.

The protein localises to the cytoplasm. The enzyme catalyses 5-[(5-phospho-1-deoxy-D-ribulos-1-ylimino)methylamino]-1-(5-phospho-beta-D-ribosyl)imidazole-4-carboxamide + L-glutamine = D-erythro-1-(imidazol-4-yl)glycerol 3-phosphate + 5-amino-1-(5-phospho-beta-D-ribosyl)imidazole-4-carboxamide + L-glutamate + H(+). It participates in amino-acid biosynthesis; L-histidine biosynthesis; L-histidine from 5-phospho-alpha-D-ribose 1-diphosphate: step 5/9. Functionally, IGPS catalyzes the conversion of PRFAR and glutamine to IGP, AICAR and glutamate. The HisF subunit catalyzes the cyclization activity that produces IGP and AICAR from PRFAR using the ammonia provided by the HisH subunit. The polypeptide is Imidazole glycerol phosphate synthase subunit HisF (Desulfitobacterium hafniense (strain DSM 10664 / DCB-2)).